Here is a 541-residue protein sequence, read N- to C-terminus: 2-hydroxyacylsphingosine 1-beta-galactosyltransferase (541 aa).

The signal sequence occupies residues Met-1 to Ala-20. N-linked (GlcNAc...) asparagine glycosylation is found at Asn-78, Asn-333, and Asn-442. A helical membrane pass occupies residues Tyr-472–Leu-492. Residues His-518–Arg-541 are disordered. Residues Gly-526–Arg-541 show a composition bias toward basic residues.

Belongs to the UDP-glycosyltransferase family.

The protein localises to the membrane. It is found in the endoplasmic reticulum. It catalyses the reaction an N-acylsphing-4-enine + UDP-alpha-D-galactose = a beta-D-galactosyl-(1&lt;-&gt;1')-N-acylsphing-4-enine + UDP + H(+). The enzyme catalyses N-(2-hydroxy-hexanoyl)-sphing-4-enine + UDP-alpha-D-galactose = N-(2-hydroxy-hexanoyl)-beta-D-galactosyl-sphing-4-enine + UDP + H(+). The catalysed reaction is N-(2-hydroxy-hexanoyl)-sphinganine + UDP-alpha-D-galactose = N-(2-hydroxyhexanoyl)-beta-D-galactosylsphinganine + UDP + H(+). It carries out the reaction an N-acyl-sphingoid base + UDP-alpha-D-galactose = a D-galactosylceramide + UDP + H(+). Its pathway is sphingolipid metabolism; galactosylceramide biosynthesis. In terms of biological role, catalyzes the transfer of galactose to ceramide, a key enzymatic step in the biosynthesis of galactocerebrosides, which are abundant sphingolipids of the myelin membrane of the central nervous system and peripheral nervous system. Galactosylates both hydroxy- and non-hydroxy fatty acid-containing ceramides and diglycerides. This chain is 2-hydroxyacylsphingosine 1-beta-galactosyltransferase, found in Mus musculus (Mouse).